The chain runs to 860 residues: Paladin (860 aa).

The interval 1 to 24 (MGTTASAAPQATLHERLHSDSMTD) is disordered. Gly2 carries N-myristoyl glycine lipidation. Positions 13–24 (LHERLHSDSMTD) are enriched in basic and acidic residues.

It belongs to the paladin family.

The protein resides in the cytoplasm. The protein localises to the cytosol. The protein is Paladin (pald1) of Danio rerio (Zebrafish).